The primary structure comprises 155 residues: Protein-export protein SecB (155 aa).

It belongs to the SecB family. Homotetramer, a dimer of dimers. One homotetramer interacts with 1 SecA dimer.

It localises to the cytoplasm. Its function is as follows. One of the proteins required for the normal export of preproteins out of the cell cytoplasm. It is a molecular chaperone that binds to a subset of precursor proteins, maintaining them in a translocation-competent state. It also specifically binds to its receptor SecA. In Paramagnetospirillum magneticum (strain ATCC 700264 / AMB-1) (Magnetospirillum magneticum), this protein is Protein-export protein SecB.